We begin with the raw amino-acid sequence, 147 residues long: Thyrotropin subunit beta (147 aa).

The signal sequence occupies residues 1-20; the sequence is MRVVLLASAVLCLLAGQVLS. 6 disulfides stabilise this stretch: cysteine 22-cysteine 72, cysteine 36-cysteine 87, cysteine 39-cysteine 126, cysteine 47-cysteine 103, cysteine 51-cysteine 105, and cysteine 108-cysteine 115. N-linked (GlcNAc...) asparagine glycosylation occurs at asparagine 43.

Belongs to the glycoprotein hormones subunit beta family. In terms of assembly, heterodimer of a common alpha chain and a unique beta chain which confers biological specificity to thyrotropin, lutropin, follitropin and gonadotropin.

The protein resides in the secreted. Its function is as follows. Indispensable for the control of thyroid structure and metabolism. May play some role in the biological processes of the immature fishes. The sequence is that of Thyrotropin subunit beta (tshb) from Anguilla anguilla (European freshwater eel).